Reading from the N-terminus, the 297-residue chain is Homoserine kinase (297 aa).

82-92 (PVSRGLGSSAA) is a binding site for ATP.

It belongs to the GHMP kinase family. Homoserine kinase subfamily.

Its subcellular location is the cytoplasm. It carries out the reaction L-homoserine + ATP = O-phospho-L-homoserine + ADP + H(+). It participates in amino-acid biosynthesis; L-threonine biosynthesis; L-threonine from L-aspartate: step 4/5. Catalyzes the ATP-dependent phosphorylation of L-homoserine to L-homoserine phosphate. The chain is Homoserine kinase from Clostridium botulinum (strain Langeland / NCTC 10281 / Type F).